A 482-amino-acid polypeptide reads, in one-letter code: Programmed cell death protein 7 (482 aa).

Disordered regions lie at residues 1 to 136 (MALP…GDAA) and 151 to 170 (GNPR…GPSL). Residues 13–48 (GPPPPQPPPSAPFGCPPPPLPSPAFPPPLPQRPGPF) show a composition bias toward pro residues. Residues 49 to 71 (PGASAPFLQPPLALQPRAPAEAS) are compositionally biased toward low complexity. 2 stretches are compositionally biased toward pro residues: residues 82–100 (PVPP…PFPG) and 109–130 (PPPP…PPPD). The segment covering 151–168 (GNPRRPGGLRTPRTPAGP) has biased composition (low complexity). Positions 233–408 (EARRRLERVR…LQKREIESKL (176 aa)) form a coiled coil.

As to quaternary structure, interacts with RBM40. Component of the U11/U12 snRNPs that are part of the U12-type spliceosome. As to expression, highly expressed in testis, thymus and lymph nodes. Detected at low levels in embryonic stem cells.

Its subcellular location is the nucleus. Functionally, promotes apoptosis when overexpressed. The sequence is that of Programmed cell death protein 7 (Pdcd7) from Mus musculus (Mouse).